The sequence spans 302 residues: NADH-cytochrome b5 reductase 2 (302 aa).

Residues 1–41 constitute a propeptide, removed in mature form; that stretch reads MFSRLSRSHSKALPIALGTVAIAAATAFYFANRNQHSFVFN. Residues 12 to 32 traverse the membrane as a helical segment; sequence ALPIALGTVAIAAATAFYFAN. In terms of domain architecture, FAD-binding FR-type spans 51 to 155; sequence DKWIDLPISK…KGPIMKWKWQ (105 aa). An FAD-binding site is contributed by 158–193; the sequence is QFKSITLLGAGTGINPLYQLAHHIVENPNDKTKVNL. Phosphoserine is present on Ser278.

The protein belongs to the flavoprotein pyridine nucleotide cytochrome reductase family. The cofactor is FAD. There are two isoforms of NADH-cytochrome b5 reductase, a 34 kDa form (p34) and a 32 kDa form (p32). The p34 form becomes firmly anchored to the outer mitochondrial membrane after an incomplete translocation arrest. The p32 form is formed after translocation of the p34 precursor to the inner mitochondrial membrane, where it is processed by mitochondrial inner membrane peptidase (IMP) complex and released to the intermembrane space.

The protein resides in the mitochondrion intermembrane space. It is found in the mitochondrion outer membrane. The catalysed reaction is 2 Fe(III)-[cytochrome b5] + NADH = 2 Fe(II)-[cytochrome b5] + NAD(+) + H(+). Functionally, the outer membrane form may mediate the reduction of outer membrane cytochrome b5, and the soluble inter-membrane space form may transfer electrons from external NADH to cytochrome c, thereby mediating an antimycin-insensitive, energy-coupled oxidation of external NADH by yeast mitochondria. Involved in the reduction of D-erythroascorbyl free radicals. The chain is NADH-cytochrome b5 reductase 2 (MCR1) from Saccharomyces cerevisiae (strain YJM789) (Baker's yeast).